Here is a 608-residue protein sequence, read N- to C-terminus: Albumin 1 (608 aa).

A signal peptide spans 1 to 14; the sequence is MQWLSVCSLLVLLS. A propeptide spanning residues 15–18 is cleaved from the precursor; sequence VLSR. Albumin domains are found at residues 19–205, 206–398, and 402–600; these read SQAQ…TFQH, AVMK…AGSD, and KITD…KLVS. Cystine bridges form between C26–C72, C71–C80, C93–C108, C107–C118, C142–C187, C186–C195, C218–C264, C263–C271, C283–C299, C298–C309, C336–C381, C380–C389, C414–C460, C459–C471, C484–C500, C499–C510, C537–C582, and C581–C590. The N-linked (GlcNAc...) asparagine glycan is linked to N501.

The protein belongs to the ALB/AFP/VDB family. In terms of tissue distribution, plasma.

Its subcellular location is the secreted. Its function is as follows. Binds water, Ca(2+), Na(+), K(+), fatty acids, hormones, bilirubin and drugs. Its main function is the regulation of the colloidal osmotic pressure of blood. The chain is Albumin 1 (alb1) from Salmo salar (Atlantic salmon).